Consider the following 920-residue polypeptide: Neurofibromin-A (920 aa).

Residues 63-291 (NKTLPLIKDL…EKMSAYFNLI (229 aa)) form the Ras-GAP domain. 2 disordered regions span residues 344–405 (KWLA…TTTA) and 477–508 (LGPS…GASM). Residues 346 to 369 (LATTPSGNTPSPAISNASSAHNGK) show a composition bias toward polar residues. The span at 370–405 (SNNTTNNNNNNNNNNNNNNNNNNNNNNNSNKTTTTA) shows a compositional bias: low complexity. Residues 498–507 (PTTSLQNGAS) show a composition bias toward polar residues. In terms of domain architecture, CRAL-TRIO spans 512 to 673 (FDECTHMLER…TSKDFITKSY (162 aa)).

Its function is as follows. Regulator of the GTPase activity of Ras, mainly RasG and RasB. This is Neurofibromin-A (nfaA) from Dictyostelium discoideum (Social amoeba).